The primary structure comprises 111 residues: MRNFITALPIVLLLGFSFVSFMFQFEHLVYFRLALGLFSLVGLYMIYKMKTGIRYFIIYLYASWIVLAAVTAFEEPIFSSFFFGGLVMTMGYLTYMLIYLGMKQDRDANPV.

Helical transmembrane passes span 4-21 (FITA…FVSF), 28-47 (LVYF…YMIY), 51-73 (TGIR…VTAF), and 80-102 (SFFF…YLGM).

It localises to the cell membrane. This is an uncharacterized protein from Bacillus subtilis (strain 168).